We begin with the raw amino-acid sequence, 653 residues long: Potassium voltage-gated channel subfamily A member 4 (653 aa).

Topologically, residues 1–304 (MEVAMVSAES…LLFEYPESSS (304 aa)) are cytoplasmic. Residues 24 to 148 (QARARERERL…RFYYSEDDHG (125 aa)) form a disordered region. Residues 36–52 (SRAAAAAAVAAATAAVE) show a composition bias toward low complexity. Basic residues predominate over residues 81–97 (GSRRRRRQRSEKKKAHY). At Ser-90 the chain carries Phosphoserine; by PKA. Phosphoserine is present on Ser-122. Over residues 122 to 137 (SEEEEDEEEEEEEEEE) the composition is skewed to acidic residues. The chain crosses the membrane as a helical span at residues 305 to 326 (PARGIAIVSVLVILISIVIFCL). Residues 327 to 370 (ETLPEFRDDRDLVMALSAGGHGGLLNDTSAPHLENSGHTIFNDP) are Extracellular-facing. N-linked (GlcNAc...) asparagine glycosylation occurs at Asn-352. Residues 371–392 (FFIVETVCIVWFSFEFVVRCFA) traverse the membrane as a helical segment. The Cytoplasmic segment spans residues 393-403 (CPSQALFFKNI). Residues 404-424 (MNIIDIVSILPYFITLGTDLA) traverse the membrane as a helical segment. Over 425–439 (QQQGGGNGQQQQAMS) the chain is Extracellular. The chain crosses the membrane as a helical; Voltage-sensor span at residues 440–460 (FAILRIIRLVRVFRIFKLSRH). Residues 461–475 (SKGLQILGHTLRASM) are Cytoplasmic-facing. Residues 462–475 (KGLQILGHTLRASM) form an S4-S5 linker region. Residues 476 to 497 (RELGLLIFFLFIGVILFSSAVY) traverse the membrane as a helical segment. Over 498-511 (FAEADEPTTHFQSI) the chain is Extracellular. Residues 512–523 (PDAFWWAVVTMT) constitute an intramembrane region (helical). Positions 524 to 529 (TVGYGD) match the Selectivity filter motif. An intramembrane segment occupies 524 to 531 (TVGYGDMK). Over 532–538 (PITVGGK) the chain is Extracellular. Residues 539–567 (IVGSLCAIAGVLTIALPVPVIVSNFNYFY) traverse the membrane as a helical segment. At 568 to 653 (HRETENEEQT…SNAKAVETDV (86 aa)) the chain is on the cytoplasmic side. At Ser-599 the chain carries Phosphoserine; by PKA. Residues 629–640 (CQGKGDDSETDK) are compositionally biased toward basic and acidic residues. Residues 629 to 653 (CQGKGDDSETDKNNCSNAKAVETDV) are disordered. The short motif at 651-653 (TDV) is the PDZ-binding element.

The protein belongs to the potassium channel family. A (Shaker) (TC 1.A.1.2) subfamily. Kv1.4/KCNA4 sub-subfamily. In terms of assembly, homotetramer and heterotetramer of potassium channel proteins. Interacts with KCNAB1 and KCNAB2. Interacts with DLG1, DLG2 and DLG4 via their PDZ domains. Interacts with SIGMAR1. Detected in a complex with KCNA1. Interacts with KCNA2. Part of a complex containing KCNA1, KCNAB1 and LGI1. Interacts (via cytoplasmic N-terminal domain) with KCNRG. Expressed in brain, and at lower levels in the testis, lung, kidney, colon and heart. Detected in heart ventricle.

The protein localises to the cell membrane. The protein resides in the cell projection. It is found in the axon. The enzyme catalyses K(+)(in) = K(+)(out). With respect to regulation, inhibited by 4-aminopyridine (4-AP), but not by tetraethylammonium (TEA) and charybdotoxin (CTX). Voltage-gated potassium channel that mediates transmembrane potassium transport in excitable membranes. Forms tetrameric potassium-selective channels through which potassium ions pass in accordance with their electrochemical gradient. The channel alternates between opened and closed conformations in response to the voltage difference across the membrane. Can form functional homotetrameric channels and heterotetrameric channels that contain variable proportions of KCNA1, KCNA2, KCNA4, KCNA5, and possibly other family members as well; channel properties depend on the type of alpha subunits that are part of the channel. Channel properties are modulated by cytoplasmic beta subunits that regulate the subcellular location of the alpha subunits and promote rapid inactivation. In vivo, membranes probably contain a mixture of heteromeric potassium channel complexes, making it difficult to assign currents observed in intact tissues to any particular potassium channel family member. Homotetrameric KCNA4 forms a potassium channel that opens in response to membrane depolarization, followed by rapid spontaneous channel closure. Likewise, a heterotetrameric channel formed by KCNA1 and KCNA4 shows rapid inactivation. This chain is Potassium voltage-gated channel subfamily A member 4 (KCNA4), found in Homo sapiens (Human).